Reading from the N-terminus, the 181-residue chain is Cytidylate kinase (181 aa).

Residue 12 to 20 (GLAGSGTTT) participates in ATP binding.

It belongs to the cytidylate kinase family. Type 2 subfamily.

Its subcellular location is the cytoplasm. The enzyme catalyses CMP + ATP = CDP + ADP. It catalyses the reaction dCMP + ATP = dCDP + ADP. This chain is Cytidylate kinase (cmk), found in Pyrococcus abyssi (strain GE5 / Orsay).